The sequence spans 362 residues: MNTPKVNILYSPGQAAQLSRTLISTCHTRPFLLGGLRVATSLHPTQTNLSSSPPRGFTTTSVVRLKDFFPAKETAYIRQTPPAWPHHGWTEEEMISVVPEHRKPETVGDWLAWKLVRICRWGTDIATGIRPEQQVDKNHPTTATSADKPLTEAQWLVRFIFLESIAGVPGMVAGMLRHLHSLRRLKRDNGWIETLLEESYNERMHLLTFMKMCEPGLLMKTLILGAQGVFFNAMFLSYLVSPKITHRFVGYLEEEAVHTYTRCIREIEEGHLPKWSDERFEIPEMAVRYWRMPEGKRTMKDLIYYIRADEAVHRGVNHTLSNLDQKEDPNPFVNDYKEGEGGRRPVNPALKPTGFERAEVIR.

The N-terminal 64 residues, 1-64 (MNTPKVNILY…RGFTTTSVVR (64 aa)), are a transit peptide targeting the mitochondrion. A helical membrane pass occupies residues 156–176 (LVRFIFLESIAGVPGMVAGML). Fe cation contacts are provided by E163, E202, and H205. The helical transmembrane segment at 222 to 242 (LILGAQGVFFNAMFLSYLVSP) threads the bilayer. E253, E310, and H313 together coordinate Fe cation.

Belongs to the alternative oxidase family. The cofactor is Fe cation.

Its subcellular location is the mitochondrion inner membrane. Its function is as follows. Catalyzes cyanide-resistant oxygen consumption. May increase respiration when the cytochrome respiratory pathway is restricted, or in response to low temperatures. This chain is Alternative oxidase, mitochondrial (aod-1), found in Gelasinospora sp. (strain S23).